Here is a 301-residue protein sequence, read N- to C-terminus: Amine sulfotransferase (301 aa).

Position 46–51 (46–51 (KSGTVW)) interacts with 3'-phosphoadenylyl sulfate. Histidine 101 functions as the Proton acceptor in the catalytic mechanism. Residues arginine 123, serine 131, tyrosine 186, 220–225 (ATFENM), and 252–254 (RKG) each bind 3'-phosphoadenylyl sulfate.

Belongs to the sulfotransferase 1 family. Expressed in male liver.

It is found in the cytoplasm. The catalysed reaction is a primary amine + 3'-phosphoadenylyl sulfate = a sulfamate + adenosine 3',5'-bisphosphate + 2 H(+). Functionally, sulfotransferase that utilizes 3'-phospho-5'-adenylyl sulfate (PAPS) as sulfonate donor to catalyze the N-sulfonation of amines (PTHP, aniline, 4-chloroaniline, 2-naphthylamine). This chain is Amine sulfotransferase (SULT3A1), found in Oryctolagus cuniculus (Rabbit).